Here is a 314-residue protein sequence, read N- to C-terminus: tRNA dimethylallyltransferase (314 aa).

Position 10–17 (10–17 (GPTAVGKT)) interacts with ATP. 12–17 (TAVGKT) serves as a coordination point for substrate. Positions 35-38 (DSMQ) are interaction with substrate tRNA.

The protein belongs to the IPP transferase family. In terms of assembly, monomer. Mg(2+) is required as a cofactor.

The enzyme catalyses adenosine(37) in tRNA + dimethylallyl diphosphate = N(6)-dimethylallyladenosine(37) in tRNA + diphosphate. Its function is as follows. Catalyzes the transfer of a dimethylallyl group onto the adenine at position 37 in tRNAs that read codons beginning with uridine, leading to the formation of N6-(dimethylallyl)adenosine (i(6)A). The sequence is that of tRNA dimethylallyltransferase from Clostridium novyi (strain NT).